Consider the following 384-residue polypeptide: 1-deoxy-D-xylulose 5-phosphate reductoisomerase (384 aa).

NADPH-binding residues include Thr10, Gly11, Ser12, Ile13, Gly36, and Asn123. Lys124 is a 1-deoxy-D-xylulose 5-phosphate binding site. Glu125 serves as a coordination point for NADPH. Asp149 provides a ligand contact to Mn(2+). 1-deoxy-D-xylulose 5-phosphate contacts are provided by Ser150, Glu151, Ser175, and His198. A Mn(2+)-binding site is contributed by Glu151. Gly204 contributes to the NADPH binding site. Residues Ser211, Asn216, Lys217, and Glu220 each coordinate 1-deoxy-D-xylulose 5-phosphate. Residue Glu220 participates in Mn(2+) binding.

Belongs to the DXR family. Mg(2+) is required as a cofactor. Mn(2+) serves as cofactor.

It carries out the reaction 2-C-methyl-D-erythritol 4-phosphate + NADP(+) = 1-deoxy-D-xylulose 5-phosphate + NADPH + H(+). The protein operates within isoprenoid biosynthesis; isopentenyl diphosphate biosynthesis via DXP pathway; isopentenyl diphosphate from 1-deoxy-D-xylulose 5-phosphate: step 1/6. In terms of biological role, catalyzes the NADPH-dependent rearrangement and reduction of 1-deoxy-D-xylulose-5-phosphate (DXP) to 2-C-methyl-D-erythritol 4-phosphate (MEP). The sequence is that of 1-deoxy-D-xylulose 5-phosphate reductoisomerase from Chlorobium phaeovibrioides (strain DSM 265 / 1930) (Prosthecochloris vibrioformis (strain DSM 265)).